The following is a 126-amino-acid chain: Small ribosomal subunit protein eS6 (126 aa).

This sequence belongs to the eukaryotic ribosomal protein eS6 family.

In Thermococcus sibiricus (strain DSM 12597 / MM 739), this protein is Small ribosomal subunit protein eS6.